A 33-amino-acid chain; its full sequence is Cytochrome b6-f complex subunit 8 (33 aa).

A helical membrane pass occupies residues 2-22; it reads LFTVAWASLAAMFSFSIAMVV.

It belongs to the PetN family. As to quaternary structure, the 4 large subunits of the cytochrome b6-f complex are cytochrome b6, subunit IV (17 kDa polypeptide, PetD), cytochrome f and the Rieske protein, while the 4 small subunits are PetG, PetL, PetM and PetN. The complex functions as a dimer.

It is found in the cellular thylakoid membrane. Functionally, component of the cytochrome b6-f complex, which mediates electron transfer between photosystem II (PSII) and photosystem I (PSI), cyclic electron flow around PSI, and state transitions. This Parasynechococcus marenigrum (strain WH8102) protein is Cytochrome b6-f complex subunit 8.